The chain runs to 106 residues: UPF0145 protein Daci_3728 (106 aa).

This sequence belongs to the UPF0145 family.

This Delftia acidovorans (strain DSM 14801 / SPH-1) protein is UPF0145 protein Daci_3728.